Consider the following 297-residue polypeptide: Bifunctional protein FolD (297 aa).

NADP(+)-binding positions include 167 to 169 (GRS) and Ile-233.

It belongs to the tetrahydrofolate dehydrogenase/cyclohydrolase family. As to quaternary structure, homodimer.

The catalysed reaction is (6R)-5,10-methylene-5,6,7,8-tetrahydrofolate + NADP(+) = (6R)-5,10-methenyltetrahydrofolate + NADPH. It carries out the reaction (6R)-5,10-methenyltetrahydrofolate + H2O = (6R)-10-formyltetrahydrofolate + H(+). It functions in the pathway one-carbon metabolism; tetrahydrofolate interconversion. In terms of biological role, catalyzes the oxidation of 5,10-methylenetetrahydrofolate to 5,10-methenyltetrahydrofolate and then the hydrolysis of 5,10-methenyltetrahydrofolate to 10-formyltetrahydrofolate. The sequence is that of Bifunctional protein FolD from Zymomonas mobilis subsp. mobilis (strain ATCC 31821 / ZM4 / CP4).